The sequence spans 89 residues: Putative regulatory protein CYB_0055 (89 aa).

The protein belongs to the RemA family.

This Synechococcus sp. (strain JA-2-3B'a(2-13)) (Cyanobacteria bacterium Yellowstone B-Prime) protein is Putative regulatory protein CYB_0055.